The sequence spans 357 residues: Chorismate synthase (357 aa).

R47 lines the NADP(+) pocket. FMN-binding positions include 123-125 (RAS), G281, 296-300 (KPTSS), and R324.

Belongs to the chorismate synthase family. In terms of assembly, homotetramer. FMNH2 serves as cofactor.

The enzyme catalyses 5-O-(1-carboxyvinyl)-3-phosphoshikimate = chorismate + phosphate. Its pathway is metabolic intermediate biosynthesis; chorismate biosynthesis; chorismate from D-erythrose 4-phosphate and phosphoenolpyruvate: step 7/7. Its function is as follows. Catalyzes the anti-1,4-elimination of the C-3 phosphate and the C-6 proR hydrogen from 5-enolpyruvylshikimate-3-phosphate (EPSP) to yield chorismate, which is the branch point compound that serves as the starting substrate for the three terminal pathways of aromatic amino acid biosynthesis. This reaction introduces a second double bond into the aromatic ring system. The sequence is that of Chorismate synthase from Chlamydia trachomatis serovar L2 (strain ATCC VR-902B / DSM 19102 / 434/Bu).